Consider the following 260-residue polypeptide: Snake venom serine proteinase 12 (260 aa).

The signal sequence occupies residues 1-18 (MVLIRVLANLLILQLSYA). Positions 19-24 (QKSSEL) are excised as a propeptide. The 227-residue stretch at 25–251 (VIGGDECNIN…HLDWIQSIIA (227 aa)) folds into the Peptidase S1 domain. 6 disulfide bridges follow: cysteine 31–cysteine 163, cysteine 50–cysteine 66, cysteine 98–cysteine 258, cysteine 142–cysteine 212, cysteine 174–cysteine 191, and cysteine 202–cysteine 227. The active-site Charge relay system is histidine 65. Asparagine 103 carries an N-linked (GlcNAc...) asparagine glycan. Aspartate 110 serves as the catalytic Charge relay system. Serine 206 acts as the Charge relay system in catalysis.

The protein belongs to the peptidase S1 family. Snake venom subfamily. As to quaternary structure, monomer. As to expression, expressed by the venom gland.

It localises to the secreted. Snake venom serine protease that may act in the hemostasis system of the prey. The chain is Snake venom serine proteinase 12 from Crotalus adamanteus (Eastern diamondback rattlesnake).